A 394-amino-acid polypeptide reads, in one-letter code: uncharacterized protein (394 aa).

One can recognise an F-box domain in the interval 7-51 (RKVIPNMPDLILRKIFDQYDYPVLCKMERVCRRWTNIINSKFRKE).

This is an uncharacterized protein from Caenorhabditis elegans.